The sequence spans 242 residues: High mobility group protein homolog (242 aa).

2 consecutive DNA-binding regions (HMG box) follow at residues P54–K122 and K126–E197.

The protein localises to the host nucleus. This is High mobility group protein homolog (EF1) from Acheta domesticus (House cricket).